Consider the following 64-residue polypeptide: Large ribosomal subunit protein bL35 (64 aa).

The protein belongs to the bacterial ribosomal protein bL35 family.

This chain is Large ribosomal subunit protein bL35, found in Coxiella burnetii (strain RSA 493 / Nine Mile phase I).